Here is a 223-residue protein sequence, read N- to C-terminus: NAD(P)H-hydrate epimerase (223 aa).

In terms of domain architecture, YjeF N-terminal spans 9 to 211; sequence AIKLDEELMG…ELKDKLHLIL (203 aa). Residue 60–64 coordinates (6S)-NADPHX; the sequence is NNGGD. K(+)-binding residues include Asn-61 and Asp-120. Residues 124-130 and Asp-153 each bind (6S)-NADPHX; that span reads GFSFKGP. Residue Ser-156 coordinates K(+).

The protein belongs to the NnrE/AIBP family. K(+) serves as cofactor.

The catalysed reaction is (6R)-NADHX = (6S)-NADHX. It carries out the reaction (6R)-NADPHX = (6S)-NADPHX. Its function is as follows. Catalyzes the epimerization of the S- and R-forms of NAD(P)HX, a damaged form of NAD(P)H that is a result of enzymatic or heat-dependent hydration. This is a prerequisite for the S-specific NAD(P)H-hydrate dehydratase to allow the repair of both epimers of NAD(P)HX. The protein is NAD(P)H-hydrate epimerase of Entamoeba histolytica (strain ATCC 30459 / HM-1:IMSS / ABRM).